A 423-amino-acid polypeptide reads, in one-letter code: Core protease OPG083 (423 aa).

Residues His241, Asp248, and Cys328 contribute to the active site.

Belongs to the peptidase C57 family.

It is found in the virion. Late protein responsible for processing most or all of the viral core and membrane proteins known to undergo morphogenesis-associated proteolysis. These proteolytic events are involved in the transformation of immature virions (IV) into mature virions (MV). Probably cleaves at least the OPG129/A3, OPG136/A10, OPG098/L4, and OPG144/A17 precursors preferentially at Ala-Gly-|-Ala motifs. Also seems to process Ala-Gly-|-Ser and Ala-Gly-|-Thr motifs. The sequence is that of Core protease OPG083 (OPG083) from Bos taurus (Bovine).